The following is a 355-amino-acid chain: tRNA-specific 2-thiouridylase MnmA (355 aa).

Residues 6-13 (LLSGGVDS) and Leu-33 each bind ATP. Cys-100 functions as the Nucleophile in the catalytic mechanism. Cys-100 and Cys-195 are oxidised to a cystine. Gly-123 serves as a coordination point for ATP. Positions 145–147 (KDQ) are interaction with tRNA. The active-site Cysteine persulfide intermediate is the Cys-195.

It belongs to the MnmA/TRMU family.

The protein resides in the cytoplasm. The catalysed reaction is S-sulfanyl-L-cysteinyl-[protein] + uridine(34) in tRNA + AH2 + ATP = 2-thiouridine(34) in tRNA + L-cysteinyl-[protein] + A + AMP + diphosphate + H(+). Its function is as follows. Catalyzes the 2-thiolation of uridine at the wobble position (U34) of tRNA, leading to the formation of s(2)U34. The sequence is that of tRNA-specific 2-thiouridylase MnmA from Borreliella burgdorferi (strain ATCC 35210 / DSM 4680 / CIP 102532 / B31) (Borrelia burgdorferi).